The sequence spans 145 residues: MDESKKNERLQQLTDIQYNVTQKAGTERPFQNEFYDNEAKGIYVDIVSGKPLFSSNDQYDAGCGWPSFTKPIDEAEVIEHRDLTHGMIRTEVKSADADSHLGHVFPDGPQDKGGLRYCINSAALRFIPVDKLEEEGYQAYKKIFE.

A MsrB domain is found at 6 to 129 (KNERLQQLTD…NSAALRFIPV (124 aa)). The active-site Nucleophile is C118.

This sequence belongs to the MsrB Met sulfoxide reductase family.

The catalysed reaction is L-methionyl-[protein] + [thioredoxin]-disulfide + H2O = L-methionyl-(R)-S-oxide-[protein] + [thioredoxin]-dithiol. The chain is Peptide methionine sulfoxide reductase MsrB from Listeria monocytogenes serotype 4b (strain CLIP80459).